The primary structure comprises 254 residues: Low affinity immunoglobulin gamma Fc region receptor III-A (254 aa).

Residues 1–16 (MWQLLLPTALLLLVSA) form the signal peptide. Over 17 to 208 (GMRTEDLPKA…ISSFFPPGYQ (192 aa)) the chain is Extracellular. Ig-like C2-type domains are found at residues 24–105 (PKAV…LEVH) and 107–189 (GWLL…VNIT). A disulfide bond links Cys-47 and Cys-89. N-linked (GlcNAc...) asparagine glycans are attached at residues Asn-56, Asn-63, and Asn-92. Residues Cys-128 and Cys-172 are joined by a disulfide bond. Residues Asn-180 and Asn-187 are each glycosylated (N-linked (GlcNAc...) asparagine). A helical membrane pass occupies residues 209–229 (VSFCLVMVLLFAVDTGLYFSV). Topologically, residues 230–254 (KTNIRSSTRDWKDHKFKWRKDPQDK) are cytoplasmic. Residue Ser-236 is modified to Phosphoserine; by PKC. Thr-237 bears the Phosphothreonine; by PKC mark.

As to quaternary structure, forms a heterooligomeric complex with ITAM-containing signaling subunits, either a homodimer of CD247, a homodimer of FCER1G or a heterodimer of CD247 and FCER1G. Interacts (via transmembrane domain) with signaling subunits; this interaction is a prerequisite for receptor complex expression on the cell surface and intracellular signal transduction. Binds the Fc region of antigen-complexed IgG with a preference for IgG1 and IgG3 isotypes. Interacts with CD2; this interaction is involved in NK cell activation and cytotoxicity. Interacts with S100A4; this interaction inhibits PKC-dependent phosphorylation of FCGR3A. Post-translationally, glycosylated. Contains high mannose- and complex-type oligosaccharides. Glycosylation at Asn-180 is mandatory for high affinity binding to the Fc and for discrimination between fucosylated and afucosylated IgG glycoforms. Undergoes rapid ectodomain shedding upon NK cell stimulation. The soluble form is produced by a proteolytic cleavage mediated by ADAM17. Repeated stimulation causes receptor shedding, a mechanism that allows for increased NK cell motility and detachment from opsonized target cells while avoiding activation-induced NK cell apoptosis. In terms of processing, phosphorylated at RSSTR motif by PKC. The relevant physiological PKCs might be PRKCI, PRKCG, PRKCE, PRKCH and PRKCQ. As to expression, expressed in natural killer cells (at protein level). Expressed in a subset of circulating monocytes (at protein level).

Its subcellular location is the cell membrane. The protein resides in the secreted. Functionally, receptor for the invariable Fc fragment of immunoglobulin gamma (IgG). Optimally activated upon binding of clustered antigen-IgG complexes displayed on cell surfaces, triggers lysis of antibody-coated cells, a process known as antibody-dependent cellular cytotoxicity (ADCC). Does not bind free monomeric IgG, thus avoiding inappropriate effector cell activation in the absence of antigenic trigger. Mediates IgG effector functions on natural killer (NK) cells. Binds antigen-IgG complexes generated upon infection and triggers NK cell-dependent cytokine production and degranulation to limit viral load and propagation. Involved in the generation of memory-like adaptive NK cells capable to produce high amounts of IFNG and to efficiently eliminate virus-infected cells via ADCC. Regulates NK cell survival and proliferation, in particular by preventing NK cell progenitor apoptosis. Fc-binding subunit that associates with CD247 and/or FCER1G adapters to form functional signaling complexes. Following the engagement of antigen-IgG complexes, triggers phosphorylation of immunoreceptor tyrosine-based activation motif (ITAM)-containing adapters with subsequent activation of phosphatidylinositol 3-kinase signaling and sustained elevation of intracellular calcium that ultimately drive NK cell activation. The ITAM-dependent signaling coupled to receptor phosphorylation by PKC mediates robust intracellular calcium flux that leads to production of pro-inflammatory cytokines, whereas in the absence of receptor phosphorylation it mainly activates phosphatidylinositol 3-kinase signaling leading to cell degranulation. Costimulates NK cells and trigger lysis of target cells independently of IgG binding. Mediates the antitumor activities of therapeutic antibodies. Upon ligation on monocytes triggers TNFA-dependent ADCC of IgG-coated tumor cells. Mediates enhanced ADCC in response to afucosylated IgGs. (Microbial infection) Involved in Dengue virus pathogenesis via antibody-dependent enhancement (ADE) mechanism. Secondary infection with Dengue virus triggers elevated levels of afucosylated non-neutralizing IgG1s with reactivity to viral envelope/E protein. Viral antigen-IgG1 complexes bind with high affinity to FCGR3A, facilitating virus entry in myeloid cells and subsequent viral replication. In Homo sapiens (Human), this protein is Low affinity immunoglobulin gamma Fc region receptor III-A.